We begin with the raw amino-acid sequence, 253 residues long: Short chain dehydrogenase ple7 (253 aa).

A helical transmembrane segment spans residues 5–25 (IVIVTGASHGIGLATVNLLLA). Residues Val-8, Arg-116, Tyr-148, Lys-152, and Asn-184 each contribute to the NADP(+) site. Tyr-148 functions as the Proton acceptor in the catalytic mechanism. The Lowers pKa of active site Tyr role is filled by Lys-152. The N-linked (GlcNAc...) asparagine glycan is linked to Asn-187.

This sequence belongs to the short-chain dehydrogenases/reductases (SDR) family.

It localises to the membrane. It participates in secondary metabolite biosynthesis; terpenoid biosynthesis. Short chain dehydrogenase; part of the gene cluster that mediates the biosynthesis of pleuromutilin, a tricyclic diterpene showing antibacterial properties. The geranylgeranyl diphosphate (GGPP) synthase ple4 catalyzes the first step in pleuromutilin biosynthesis. GGPP is then substrate of the premutilin synthase (PS) ple3 to yield premutilin. Premutilin synthase is a bifunctional enzyme composed of the fusion of a class II diterpene cyclase (DTC) and a class I diterpene synthase (DTS), with the corresponding domains and active sites containing characteristic aspartate-rich motifs. GGPP is first converted to mutildienyl-diphosphate (MPP) at the class II DTC site. MPP is subsequently further cyclized at the class I DTS site, followed by a 1,5-hydride shift and addition of water prior to terminating deprotonation, to yield premutilin. The cytochrome P450 monooxygenases ple5 and ple6 hydroxylate premutilin at C-11 and C-3, respectively, producing 11-hydroxypremutilin and 3-hydroxypremutilin. The combination of the actions of both ple5 and ple6 leads to the production of 3,11-dihydroxypremutilin. The short chain dehydrogenase ple7 further converts 3,11-dihydroxypremutilin into mutilin. The acetyltransferase ple2 then acetylates mutilin to produce 14-O-acetylmutilin. Finally, the cytochrome P450 monooxygenase ple1 catalyzes hydroxylation on the alpha position of the acetyl side chain of 14-O-acetylmutilin to yield pleuromutilin. The sequence is that of Short chain dehydrogenase ple7 from Rhodocybe pseudopiperita (Clitopilus pseudopiperitus).